A 197-amino-acid polypeptide reads, in one-letter code: Phosphoheptose isomerase (197 aa).

The region spanning 36 to 197 is the SIS domain; that stretch reads LVHSLAQGGK…VDSLLLGVEE (162 aa). 51–53 is a binding site for substrate; the sequence is NGG. 2 residues coordinate Zn(2+): His60 and Glu64. Substrate is bound by residues Glu64, 93–94, 119–121, Ser124, and Gln174; these read ND and STS. Residues Gln174 and His182 each contribute to the Zn(2+) site.

It belongs to the SIS family. GmhA subfamily. As to quaternary structure, homotetramer. It depends on Zn(2+) as a cofactor.

The protein localises to the cytoplasm. The enzyme catalyses 2 D-sedoheptulose 7-phosphate = D-glycero-alpha-D-manno-heptose 7-phosphate + D-glycero-beta-D-manno-heptose 7-phosphate. The protein operates within carbohydrate biosynthesis; D-glycero-D-manno-heptose 7-phosphate biosynthesis; D-glycero-alpha-D-manno-heptose 7-phosphate and D-glycero-beta-D-manno-heptose 7-phosphate from sedoheptulose 7-phosphate: step 1/1. Catalyzes the isomerization of sedoheptulose 7-phosphate in D-glycero-D-manno-heptose 7-phosphate. The sequence is that of Phosphoheptose isomerase from Thiobacillus denitrificans (strain ATCC 25259 / T1).